Here is a 303-residue protein sequence, read N- to C-terminus: Acetyl-coenzyme A carboxylase carboxyl transferase subunit beta (303 aa).

In terms of domain architecture, CoA carboxyltransferase N-terminal spans 29–298 (LWVKCPETGQ…ATPAPASAAA (270 aa)).

It belongs to the AccD/PCCB family. In terms of assembly, acetyl-CoA carboxylase is a heterohexamer composed of biotin carboxyl carrier protein (AccB), biotin carboxylase (AccC) and two subunits each of ACCase subunit alpha (AccA) and ACCase subunit beta (AccD).

The protein localises to the cytoplasm. It catalyses the reaction N(6)-carboxybiotinyl-L-lysyl-[protein] + acetyl-CoA = N(6)-biotinyl-L-lysyl-[protein] + malonyl-CoA. The protein operates within lipid metabolism; malonyl-CoA biosynthesis; malonyl-CoA from acetyl-CoA: step 1/1. Its function is as follows. Component of the acetyl coenzyme A carboxylase (ACC) complex. Biotin carboxylase (BC) catalyzes the carboxylation of biotin on its carrier protein (BCCP) and then the CO(2) group is transferred by the transcarboxylase to acetyl-CoA to form malonyl-CoA. This is Acetyl-coenzyme A carboxylase carboxyl transferase subunit beta from Methylobacterium sp. (strain 4-46).